The sequence spans 562 residues: Glucose-6-phosphate isomerase (562 aa).

Glu370 (proton donor) is an active-site residue. Catalysis depends on residues His401 and Lys526.

Belongs to the GPI family.

It is found in the cytoplasm. The enzyme catalyses alpha-D-glucose 6-phosphate = beta-D-fructose 6-phosphate. It functions in the pathway carbohydrate biosynthesis; gluconeogenesis. It participates in carbohydrate degradation; glycolysis; D-glyceraldehyde 3-phosphate and glycerone phosphate from D-glucose: step 2/4. Functionally, catalyzes the reversible isomerization of glucose-6-phosphate to fructose-6-phosphate. This chain is Glucose-6-phosphate isomerase, found in Deinococcus geothermalis (strain DSM 11300 / CIP 105573 / AG-3a).